We begin with the raw amino-acid sequence, 106 residues long: MVNFLKTKADFDQALKDAGDKLVVIDFTASWCGPCQRIAPKYVEMAKEFPDVIFYKVDVDENDETAEAEKIQAMPTFKFYKSGKALSDYVQGANEAGLREKIKKNK.

The Thioredoxin domain maps to 2–106 (VNFLKTKADF…GLREKIKKNK (105 aa)). Active-site nucleophile residues include C32 and C35. Cysteines 32 and 35 form a disulfide.

The protein belongs to the thioredoxin family.

The protein localises to the cytoplasm. Its function is as follows. Participates in various redox reactions through the reversible oxidation of its active center dithiol to a disulfide and catalyzes dithiol-disulfide exchange reactions. The protein is Thioredoxin (THIO) of Geodia cydonium (Sponge).